The primary structure comprises 432 residues: Short/branched chain specific acyl-CoA dehydrogenase, mitochondrial (432 aa).

The N-terminal 33 residues, 1-33, are a transit peptide targeting the mitochondrion; sequence MEGLAVRLLRGSRLLRRNFLTCLSSWKIPPHVS. The residue at position 70 (Lys70) is an N6-acetyllysine; alternate. Position 70 is an N6-succinyllysine; alternate (Lys70). FAD is bound by residues 174–183 and 207–209; these read FCLSEAGAGS and WIS. Ser183 serves as a coordination point for substrate. Residue Ser183 is modified to Phosphoserine. Substrate-binding residues include Tyr229 and Tyr283. At Lys284 the chain carries N6-acetyllysine; alternate. At Lys284 the chain carries N6-succinyllysine; alternate. 291-294 contributes to the substrate binding site; that stretch reads NEGR. FAD contacts are provided by residues Arg319, Gln330, and 387–391; that span reads EWMGG. Catalysis depends on Glu414, which acts as the Proton acceptor. FAD is bound at residue 416–418; that stretch reads ASN. Lys426 carries the post-translational modification N6-acetyllysine.

It belongs to the acyl-CoA dehydrogenase family. In terms of assembly, homotetramer. FAD is required as a cofactor. As to expression, ubiquitously expressed.

Its subcellular location is the mitochondrion matrix. It carries out the reaction 2-methylbutanoyl-CoA + oxidized [electron-transfer flavoprotein] + H(+) = (2E)-2-methylbut-2-enoyl-CoA + reduced [electron-transfer flavoprotein]. It catalyses the reaction (2S)-2-methylbutanoyl-CoA + oxidized [electron-transfer flavoprotein] + H(+) = (2E)-2-methylbut-2-enoyl-CoA + reduced [electron-transfer flavoprotein]. The catalysed reaction is (2R)-2-methylbutanoyl-CoA + oxidized [electron-transfer flavoprotein] + H(+) = ethylacryloyl-CoA + reduced [electron-transfer flavoprotein]. The enzyme catalyses butanoyl-CoA + oxidized [electron-transfer flavoprotein] + H(+) = (2E)-butenoyl-CoA + reduced [electron-transfer flavoprotein]. It carries out the reaction 2-methylpropanoyl-CoA + oxidized [electron-transfer flavoprotein] + H(+) = 2-methylpropenoyl-CoA + reduced [electron-transfer flavoprotein]. It catalyses the reaction hexanoyl-CoA + oxidized [electron-transfer flavoprotein] + H(+) = (2E)-hexenoyl-CoA + reduced [electron-transfer flavoprotein]. The catalysed reaction is 2-methylhexanoyl-CoA + oxidized [electron-transfer flavoprotein] + H(+) = 2-methylhexenoyl-CoA + reduced [electron-transfer flavoprotein]. The enzyme catalyses valproyl-CoA + oxidized [electron-transfer flavoprotein] + H(+) = (2E)-2-propylpent-2-enoyl-CoA + reduced [electron-transfer flavoprotein]. It functions in the pathway lipid metabolism; mitochondrial fatty acid beta-oxidation. The protein operates within amino-acid degradation; L-isoleucine degradation. With respect to regulation, competitively inhibited by valproyl-CoA. Short and branched chain specific acyl-CoA dehydrogenase that catalyzes the removal of one hydrogen from C-2 and C-3 of the fatty acyl-CoA thioester, resulting in the formation of trans-2-enoyl-CoA. Among the different mitochondrial acyl-CoA dehydrogenases, acts specifically on short and branched chain acyl-CoA derivatives such as (S)-2-methylbutyryl-CoA as well as short straight chain acyl-CoAs such as butyryl-CoA. Plays an important role in the metabolism of L-isoleucine by catalyzing the dehydrogenation of 2-methylbutyryl-CoA, one of the steps of the L-isoleucine catabolic pathway. Can also act on valproyl-CoA, a metabolite of valproic acid, an antiepileptic drug. The sequence is that of Short/branched chain specific acyl-CoA dehydrogenase, mitochondrial from Homo sapiens (Human).